We begin with the raw amino-acid sequence, 561 residues long: Arginine--tRNA ligase (561 aa).

Positions 128-138 (ANPTGPLHVGH) match the 'HIGH' region motif.

Belongs to the class-I aminoacyl-tRNA synthetase family. Monomer.

The protein resides in the cytoplasm. The enzyme catalyses tRNA(Arg) + L-arginine + ATP = L-arginyl-tRNA(Arg) + AMP + diphosphate. The chain is Arginine--tRNA ligase from Leptothrix cholodnii (strain ATCC 51168 / LMG 8142 / SP-6) (Leptothrix discophora (strain SP-6)).